The chain runs to 968 residues: AP2-associated protein kinase 1 (968 aa).

Met1 carries the N-acetylmethionine modification. A compositionally biased stretch (basic and acidic residues) spans 1–11 (MKKFFDSRREQ). A disordered region spans residues 1–25 (MKKFFDSRREQGGSGLGSGSSGGGG). Over residues 12 to 25 (GGSGLGSGSSGGGG) the composition is skewed to gly residues. The residue at position 14 (Ser14) is a Phosphoserine. The Protein kinase domain maps to 46–315 (VTVDEVLAEG…QVSFFSFKLL (270 aa)). Residues 52–60 (LAEGGFAIV) and Lys74 contribute to the ATP site. Asp176 (proton acceptor) is an active-site residue. Tyr234 is subject to Phosphotyrosine. Ser235 carries the post-translational modification Phosphoserine. Disordered regions lie at residues 327 to 485 (SPIP…AQAP) and 578 to 640 (IQPP…AGHR). Residues Thr354 and Thr389 each carry the phosphothreonine modification. Arg391 carries the omega-N-methylarginine modification. Pro residues predominate over residues 437–448 (QAPPAPQQPPSA). Composition is skewed to low complexity over residues 449 to 472 (PAQGLPAQAQATPQHQQQLFLKQQ) and 578 to 589 (IQPPQAQPATAS). Thr613 is subject to Phosphothreonine. Position 625 is a phosphoserine (Ser625). Thr627 carries the phosphothreonine modification. 4 positions are modified to phosphoserine: Ser630, Ser631, Ser644, and Ser657. Thr660 carries the post-translational modification Phosphothreonine. Positions 671–708 (SLNKSKSATTTPSGSPRASQQNVYNPSEGSTWNPFDDD) are disordered. The segment covering 679-703 (TTTPSGSPRASQQNVYNPSEGSTWN) has biased composition (polar residues). Tyr694 carries the post-translational modification Phosphotyrosine. A phosphoserine mark is found at Ser738, Ser853, Ser944, and Ser945. The segment at 830-967 (EKADVAVESL…SLLLVDQLID (138 aa)) is clathrin-binding domain (CBD). Disordered regions lie at residues 843–862 (LEPPVPQRLPSQTESVASNR) and 929–952 (PVLITKNPQGGHSRNSSGSSESSL). Positions 851 to 862 (LPSQTESVASNR) are enriched in polar residues. The span at 938–951 (GGHSRNSSGSSESS) shows a compositional bias: low complexity.

The protein belongs to the protein kinase superfamily. Ser/Thr protein kinase family. As to quaternary structure, interacts (via CBD domain) with clathrin. Interacts with AP-2 complex. Interacts with NUMB. Interacts with alpha-adaptin. Interacts with EPS15. Interacts with membrane-bound activated NOTCH1 but not with the inactive full-length form of NOTCH1. Preferentially interacts with monoubiquitinated activated NOTCH1 compared to the non-ubiquitinated form. In terms of processing, autophosphorylated.

It localises to the cell membrane. The protein resides in the membrane. The protein localises to the clathrin-coated pit. Its subcellular location is the presynapse. The enzyme catalyses L-seryl-[protein] + ATP = O-phospho-L-seryl-[protein] + ADP + H(+). It catalyses the reaction L-threonyl-[protein] + ATP = O-phospho-L-threonyl-[protein] + ADP + H(+). Its activity is regulated as follows. Stimulated by clathrin. Functionally, regulates clathrin-mediated endocytosis by phosphorylating the AP2M1/mu2 subunit of the adaptor protein complex 2 (AP-2) which ensures high affinity binding of AP-2 to cargo membrane proteins during the initial stages of endocytosis. Preferentially, may phosphorylate substrates on threonine residues. Regulates phosphorylation of other AP-2 subunits as well as AP-2 localization and AP-2-mediated internalization of ligand complexes. Phosphorylates NUMB and regulates its cellular localization, promoting NUMB localization to endosomes. Binds to and stabilizes the activated form of NOTCH1, increases its localization in endosomes and regulates its transcriptional activity. The protein is AP2-associated protein kinase 1 (AAK1) of Sus scrofa (Pig).